Consider the following 101-residue polypeptide: Protein RADIALIS-like 2 (101 aa).

An SANT domain is found at Tyr9 to Glu64. The tract at residues Gly69–Gln101 is disordered.

As to expression, expressed in the funiculus of ovules and in embryos. In young ovules, expression is observed in the adaxial side of the funiculus (the stalk connecting the embryo sac to the placenta). Also expressed in heart-stage embryos, in the cortex and endodermis of the hypocotyl region but not in the cotyledons, shoot and root apical meristems, provasculature or epidermis. Not detected in young seedlings, mature roots or in young floral primordia.

It localises to the nucleus. Probable transcription factor. Required for female gametophyte development. The chain is Protein RADIALIS-like 2 (RL2) from Arabidopsis thaliana (Mouse-ear cress).